Here is a 125-residue protein sequence, read N- to C-terminus: UPF0231 protein APL_0968 (125 aa).

Belongs to the UPF0231 family.

In Actinobacillus pleuropneumoniae serotype 5b (strain L20), this protein is UPF0231 protein APL_0968.